The chain runs to 212 residues: Large ribosomal subunit protein uL3 (212 aa).

A disordered region spans residues 136 to 155 (THGNSVSHRVLGSTGQNQTP). N5-methylglutamine is present on Gln-153.

Belongs to the universal ribosomal protein uL3 family. In terms of assembly, part of the 50S ribosomal subunit. Forms a cluster with proteins L14 and L19. In terms of processing, methylated by PrmB.

In terms of biological role, one of the primary rRNA binding proteins, it binds directly near the 3'-end of the 23S rRNA, where it nucleates assembly of the 50S subunit. This is Large ribosomal subunit protein uL3 from Acinetobacter baumannii (strain AB307-0294).